The chain runs to 439 residues: Homogentisate 1,2-dioxygenase (439 aa).

Residues His335, Glu341, and His371 each contribute to the Fe cation site.

This sequence belongs to the homogentisate dioxygenase family. Requires Fe cation as cofactor.

The catalysed reaction is homogentisate + O2 = 4-maleylacetoacetate + H(+). It functions in the pathway amino-acid degradation; L-phenylalanine degradation; acetoacetate and fumarate from L-phenylalanine: step 4/6. The protein is Homogentisate 1,2-dioxygenase of Drosophila melanogaster (Fruit fly).